The primary structure comprises 190 residues: Probable RNA-binding protein 18 (190 aa).

The RRM domain occupies 25 to 106; the sequence is HRLWIGNLDP…KKLVVRWAHA (82 aa). Residues 166–190 form a disordered region; it reads VYSYFKPPDKKRTTPYSRTAWKSRR.

The chain is Probable RNA-binding protein 18 (RBM18) from Bos taurus (Bovine).